A 100-amino-acid chain; its full sequence is Defensin-like protein 316 (100 aa).

The N-terminal stretch at 1–18 (MASHIICYIFCIIKLSCA) is a signal peptide. 3 cysteine pairs are disulfide-bonded: C21-C84, C43-C64, and C53-C76.

It belongs to the DEFL family.

It localises to the secreted. This Arabidopsis thaliana (Mouse-ear cress) protein is Defensin-like protein 316.